A 209-amino-acid chain; its full sequence is Fibroblast growth factor 21 (209 aa).

The signal sequence occupies residues 1–28 (MDSDETGFEHSGLWVSVLAGLLLGACQA). The segment at 143–209 (PLHLPGNKSP…SQGRSPSYAS (67 aa)) is disordered. Residues 168-186 (PGLPPALPEPPGILAPQPP) show a composition bias toward pro residues.

It belongs to the heparin-binding growth factors family. Interacts (via C-terminus) with KLB; this interaction is direct. Interacts with FGFR4.

Its subcellular location is the secreted. In terms of biological role, stimulates glucose uptake in differentiated adipocytes via the induction of glucose transporter SLC2A1/GLUT1 expression (but not SLC2A4/GLUT4 expression). Activity requires the presence of KLB. Regulates systemic glucose homeostasis and insulin sensitivity. In Homo sapiens (Human), this protein is Fibroblast growth factor 21 (FGF21).